Here is a 273-residue protein sequence, read N- to C-terminus: Co-chaperone protein DjlA (273 aa).

At 1–6 (MHYWGK) the chain is on the periplasmic side. A helical transmembrane segment spans residues 7 to 31 (LLGLIFGVVSGAGFWGIVIGLFIGH). The Cytoplasmic portion of the chain corresponds to 32–273 (MLDRASVRGN…DLIKKEKGFK (242 aa)). The J domain occupies 207 to 273 (DACKVLGVRE…DLIKKEKGFK (67 aa)).

In terms of assembly, homodimer.

It is found in the cell inner membrane. Its function is as follows. Regulatory DnaK co-chaperone. Direct interaction between DnaK and DjlA is needed for the induction of the wcaABCDE operon, involved in the synthesis of a colanic acid polysaccharide capsule, possibly through activation of the RcsB/RcsC phosphotransfer signaling pathway. The colanic acid capsule may help the bacterium survive conditions outside the host. The chain is Co-chaperone protein DjlA from Photorhabdus laumondii subsp. laumondii (strain DSM 15139 / CIP 105565 / TT01) (Photorhabdus luminescens subsp. laumondii).